The primary structure comprises 226 residues: PKHD-type hydroxylase PP_0862 (226 aa).

The region spanning 78–178 (KVFPPLINCY…RYAAFFWTQS (101 aa)) is the Fe2OG dioxygenase domain. Residues H96, D98, and H159 each contribute to the Fe cation site. R169 contributes to the 2-oxoglutarate binding site.

The cofactor is Fe(2+). It depends on L-ascorbate as a cofactor.

The chain is PKHD-type hydroxylase PP_0862 from Pseudomonas putida (strain ATCC 47054 / DSM 6125 / CFBP 8728 / NCIMB 11950 / KT2440).